A 774-amino-acid polypeptide reads, in one-letter code: Protein translocase subunit SecA (774 aa).

Residues Q66, 84–88 (GEGKS), and D474 each bind ATP.

It belongs to the SecA family.

It is found in the plastid. The protein localises to the chloroplast stroma. The protein resides in the chloroplast thylakoid membrane. The catalysed reaction is ATP + H2O + cellular proteinSide 1 = ADP + phosphate + cellular proteinSide 2.. Functionally, has a central role in coupling the hydrolysis of ATP to the transfer of proteins across the thylakoid membrane. The chain is Protein translocase subunit SecA from Cyanidioschyzon merolae (strain NIES-3377 / 10D) (Unicellular red alga).